Here is an 808-residue protein sequence, read N- to C-terminus: Disks large-associated protein 5 (808 aa).

Serine 66 and serine 70 each carry phosphoserine. Positions 88–119 form a coiled coil; it reads QRKQLLQKYKEEKQLQKLKEQREKAKRGVFKV. The disordered stretch occupies residues 134-282; the sequence is QRGAKAEPEK…QTRETSEMGP (149 aa). Basic and acidic residues-rich tracts occupy residues 135–145 and 180–193; these read RGAKAEPEKAF and QTSE…ERKV. Position 201 is a phosphoserine (serine 201). Composition is skewed to basic and acidic residues over residues 232–241 and 249–278; these read TNEKGSERMR and KKPE…RETS. At serine 328 the chain carries Phosphoserine. Phosphothreonine is present on residues threonine 337 and threonine 386. The interval 377 to 413 is disordered; it reads HVLNQKGASTSDSNHASVKGVPCSEGSEGQTSQPPHD. A compositionally biased stretch (polar residues) spans 382 to 392; it reads KGASTSDSNHA. The residue at position 598 (serine 598) is a Phosphoserine. Serine 607 carries the post-translational modification Phosphoserine; by AURKA. A Phosphoserine modification is found at serine 612. Threonine 617 carries the phosphothreonine modification. Serine 620 is subject to Phosphoserine. The disordered stretch occupies residues 629–654; sequence RAAGDLLRQKMPLKKPDPQSSKSEHV. The span at 642 to 654 shows a compositional bias: basic and acidic residues; it reads KKPDPQSSKSEHV. At threonine 728 the chain carries Phosphothreonine. Residues 735–757 form a disordered region; it reads SNPETNTSSQSNTSQEEAEASQS. Serine 743 is modified (phosphoserine). Serine 797 carries the post-translational modification Phosphoserine; by AURKA. Serine 806 carries the post-translational modification Phosphoserine.

This sequence belongs to the SAPAP family. Interacts with CDC2. Interacts with the C-terminal proline-rich region of FBXO7. Recruited by FBXO7 to a SCF (SKP1-CUL1-F-box) protein complex in a CDC2/Cyclin B-phosphorylation dependent manner. Interacts with CDH1. Post-translationally, ubiquitinated, leading to its degradation. In terms of processing, decreased phosphorylation levels are associated with the differentiation of intestinal epithelial cells. As to expression, expressed at low levels in normal resting liver. Up-regulated in regenerating liver after partial hepatectomy.

It localises to the nucleus. The protein resides in the cytoplasm. It is found in the cytoskeleton. Its subcellular location is the spindle. Functionally, potential cell cycle regulator that may play a role in carcinogenesis of cancer cells. Mitotic phosphoprotein regulated by the ubiquitin-proteasome pathway. Key regulator of adherens junction integrity and differentiation that may be involved in CDH1-mediated adhesion and signaling in epithelial cells. The sequence is that of Disks large-associated protein 5 (Dlgap5) from Mus musculus (Mouse).